A 220-amino-acid chain; its full sequence is Grancalcin (220 aa).

4 consecutive EF-hand domains span residues 51–86 (SPADDSMWTYFTAVAGQDGEVDAEELQRCLTQSGIS), 92–127 (FSLETCRIMIAMLDRDYTGKMGFNEFKELWAALNAW), 122–157 (AALNAWKQNFMTIDQDQSGTVEHHELSQAIALMGYR), and 158–193 (LSPQTLAAIVRRYSKNGRIFFDDYVACCVKLRALTD). Residues Asp-105, Asp-107, Thr-109, Lys-111, Glu-116, Asp-135, Asp-137, Ser-139, Thr-141, and Glu-146 each coordinate Ca(2+).

In terms of assembly, homodimer. Interacts with SRI and LCP1.

It is found in the cytoplasm. It localises to the cytoplasmic granule membrane. Functionally, calcium-binding protein that may play a role in the adhesion of neutrophils to fibronectin. May play a role in the formation of focal adhesions. The polypeptide is Grancalcin (Gca) (Mus musculus (Mouse)).